Here is a 114-residue protein sequence, read N- to C-terminus: T cell receptor beta variable 5-1 (114 aa).

A signal peptide spans 1–21; it reads MGSRLLCWVLLCLLGAGPVKA. The Ig-like domain maps to 22–114; it reads GVTQTPRYLI…SALYLCASSL (93 aa). A disulfide bridge connects residues C42 and C110. A glycan (N-linked (GlcNAc...) asparagine) is linked at N96.

In terms of assembly, alpha-beta TR is a heterodimer composed of an alpha and beta chain; disulfide-linked. The alpha-beta TR is associated with the transmembrane signaling CD3 coreceptor proteins to form the TR-CD3 (TcR or TCR). The assembly of alpha-beta TR heterodimers with CD3 occurs in the endoplasmic reticulum where a single alpha-beta TR heterodimer associates with one CD3D-CD3E heterodimer, one CD3G-CD3E heterodimer and one CD247 homodimer forming a stable octameric structure. CD3D-CD3E and CD3G-CD3E heterodimers preferentially associate with TR alpha and TR beta chains, respectively. The association of the CD247 homodimer is the last step of TcR assembly in the endoplasmic reticulum and is required for transport to the cell surface.

It is found in the cell membrane. V region of the variable domain of T cell receptor (TR) beta chain that participates in the antigen recognition. Alpha-beta T cell receptors are antigen specific receptors which are essential to the immune response and are present on the cell surface of T lymphocytes. Recognize peptide-major histocompatibility (MH) (pMH) complexes that are displayed by antigen presenting cells (APC), a prerequisite for efficient T cell adaptive immunity against pathogens. Binding of alpha-beta TR to pMH complex initiates TR-CD3 clustering on the cell surface and intracellular activation of LCK that phosphorylates the ITAM motifs of CD3G, CD3D, CD3E and CD247 enabling the recruitment of ZAP70. In turn ZAP70 phosphorylates LAT, which recruits numerous signaling molecules to form the LAT signalosome. The LAT signalosome propagates signal branching to three major signaling pathways, the calcium, the mitogen-activated protein kinase (MAPK) kinase and the nuclear factor NF-kappa-B (NF-kB) pathways, leading to the mobilization of transcription factors that are critical for gene expression and essential for T cell growth and differentiation. The T cell repertoire is generated in the thymus, by V-(D)-J rearrangement. This repertoire is then shaped by intrathymic selection events to generate a peripheral T cell pool of self-MH restricted, non-autoaggressive T cells. Post-thymic interaction of alpha-beta TR with the pMH complexes shapes TR structural and functional avidity. The polypeptide is T cell receptor beta variable 5-1 (Homo sapiens (Human)).